Here is a 399-residue protein sequence, read N- to C-terminus: Tyrosine--tRNA ligase (399 aa).

Residues 42–51 carry the 'HIGH' region motif; sequence PTAPDLHLGH. The 'KMSKS' region motif lies at 226 to 230; sequence KMSKS. Lysine 229 is a binding site for ATP. Residues 337–398 form the S4 RNA-binding domain; that stretch reads LPVFQVVKQA…GKRKFASVVL (62 aa).

This sequence belongs to the class-I aminoacyl-tRNA synthetase family. TyrS type 2 subfamily. As to quaternary structure, homodimer.

It localises to the cytoplasm. It catalyses the reaction tRNA(Tyr) + L-tyrosine + ATP = L-tyrosyl-tRNA(Tyr) + AMP + diphosphate + H(+). Its function is as follows. Catalyzes the attachment of tyrosine to tRNA(Tyr) in a two-step reaction: tyrosine is first activated by ATP to form Tyr-AMP and then transferred to the acceptor end of tRNA(Tyr). The polypeptide is Tyrosine--tRNA ligase (Aromatoleum aromaticum (strain DSM 19018 / LMG 30748 / EbN1) (Azoarcus sp. (strain EbN1))).